Here is a 1125-residue protein sequence, read N- to C-terminus: Telomerase reverse transcriptase (1125 aa).

The RNA-interacting domain 1 stretch occupies residues 1–234 (MPRAPRCRAV…ARRRRSSARG (234 aa)). The tract at residues 58-199 (VPWDAQPPPA…RQVGGTRAGF (142 aa)) is GQ motif. Residues 137–141 (WGLLL) are required for regulating specificity for telomeric DNA and for processivity for primer elongation. Residues 186–308 (RRPTRQVGGT…WRLSPSEGEP (123 aa)) are disordered. Over residues 224–243 (GARRRRSSARGRLPPAKRPR) the composition is skewed to basic residues. A Bipartite nuclear localization signal motif is present at residues 226-244 (RRRRSSARGRLPPAKRPRR). Ser-231 is subject to Phosphoserine; by PKB/AKT1. The interval 235-312 (RLPPAKRPRR…PSEGEPGAGA (78 aa)) is linker. 2 stretches are compositionally biased toward basic and acidic residues: residues 244 to 253 (RGLEPGRDLE) and 269 to 279 (DAAEAKSRKGD). The segment at 290–531 (GERGVGSASW…VPAAEHRQRE (242 aa)) is required for oligomerization. Residues 313–543 (CAETKRFLYC…LGRFLHWLMG (231 aa)) are RNA-interacting domain 2. The short motif at 316-321 (TKRFLY) is the TFLY; involved in RNA binding element. Positions 364–514 (PRRPRRLPAR…MKVQDCAWLR (151 aa)) are QFP motif. The segment at 385-405 (LGNHARSPYGALLRAHCPLPA) is CP motif. Ser-450 carries the post-translational modification Phosphoserine; by DYRK2. One can recognise a Reverse transcriptase domain in the interval 598–928 (EVRQHQEARP…CLFPWCGLLL (331 aa)). Residue Tyr-700 is modified to Phosphotyrosine; by SRC-type Tyr-kinases. Residues Asp-705, Asp-861, and Asp-862 each contribute to the Mg(2+) site. Residues 907–921 (LGGAAPLQLPAHCLF) are required for oligomerization. The segment at 923–927 (WCGLL) is primer grip sequence. The segment at 929 to 1125 (DTRTLEVHGD…LTADFKTILD (197 aa)) is CTE.

Belongs to the reverse transcriptase family. Telomerase subfamily. As to quaternary structure, catalytic component of the telomerase holoenzyme complex composed of one molecule of TERT, one molecule of WRAP53/TCAB1, two molecules of H/ACA ribonucleoprotein complex subunits DKC1, NOP10, NHP2 and GAR1, and a telomerase RNA template component (TERC). The telomerase holoenzyme complex is associated with TEP1, SMG6/EST1A and POT1. The molecular chaperone HSP90/P23 complex is required for correct assembly and stabilization of the active telomerase. Interacts directly with HSP90A and PTGES3. Interacts with HSPA1A; the interaction occurs in the absence of TERC and dissociates once the complex has formed. Interacts with RAN; the interaction promotes nuclear export of TERT. Interacts with XPO1. Interacts with PTPN11; the interaction retains TERT in the nucleus. Interacts with NCL (via RRM1 and C-terminal RRM4/Arg/Gly-rich domains); the interaction is important for nucleolar localization of TERT. Interacts with SMARCA4 (via the bromodomain); the interaction regulates Wnt-mediated signaling. Interacts with MCRS1 (isoform MCRS2); the interaction inhibits in vitro telomerase activity. Interacts with PIF1; the interaction has no effect on the elongation activity of TERT. Interacts with PML; the interaction recruits TERT to PML bodies and inhibits telomerase activity. Interacts with GNL3L. Interacts with isoform 1 and isoform 2 of NVL. Interacts with DHX36. Interacts with ATF7. Post-translationally, phosphorylation at Tyr-700 under oxidative stress leads to translocation of TERT to the cytoplasm and reduces its antiapoptotic activity. Dephosphorylated by SHP2/PTPN11 leading to nuclear retention. Phosphorylation at Ser-231 by the AKT pathway promotes nuclear location. Phosphorylation at the G2/M phase at Ser-450 by DYRK2 promotes ubiquitination by the EDVP complex and degradation. In terms of processing, ubiquitinated by the EDVP complex, a E3 ligase complex following phosphorylation at Ser-450 by DYRK2. Ubiquitinated leads to proteasomal degradation.

The protein localises to the nucleus. The protein resides in the nucleolus. It is found in the nucleoplasm. It localises to the chromosome. Its subcellular location is the telomere. The protein localises to the cytoplasm. The protein resides in the PML body. The enzyme catalyses DNA(n) + a 2'-deoxyribonucleoside 5'-triphosphate = DNA(n+1) + diphosphate. Telomerase is a ribonucleoprotein enzyme essential for the replication of chromosome termini in most eukaryotes. Active in progenitor and cancer cells. Inactive, or very low activity, in normal somatic cells. Catalytic component of the teleromerase holoenzyme complex whose main activity is the elongation of telomeres by acting as a reverse transcriptase that adds simple sequence repeats to chromosome ends by copying a template sequence within the RNA component of the enzyme. Catalyzes the RNA-dependent extension of 3'-chromosomal termini with the 6-nucleotide telomeric repeat unit, 5'-TTAGGG-3'. The catalytic cycle involves primer binding, primer extension and release of product once the template boundary has been reached or nascent product translocation followed by further extension. More active on substrates containing 2 or 3 telomeric repeats. Telomerase activity is regulated by a number of factors including telomerase complex-associated proteins, chaperones and polypeptide modifiers. Modulates Wnt signaling. Plays important roles in aging and antiapoptosis. This Bos taurus (Bovine) protein is Telomerase reverse transcriptase (TERT).